The primary structure comprises 306 residues: Ribosomal protein L11 methyltransferase (306 aa).

Positions 154, 179, 201, and 242 each coordinate S-adenosyl-L-methionine.

Belongs to the methyltransferase superfamily. PrmA family.

It is found in the cytoplasm. The catalysed reaction is L-lysyl-[protein] + 3 S-adenosyl-L-methionine = N(6),N(6),N(6)-trimethyl-L-lysyl-[protein] + 3 S-adenosyl-L-homocysteine + 3 H(+). Its function is as follows. Methylates ribosomal protein L11. This is Ribosomal protein L11 methyltransferase from Xanthomonas campestris pv. campestris (strain 8004).